A 421-amino-acid polypeptide reads, in one-letter code: Protein PHLOEM UNLOADING MODULATOR (421 aa).

Transmembrane regions (helical) follow at residues 30 to 50, 60 to 80, 124 to 144, 158 to 178, 286 to 306, 323 to 343, and 397 to 417; these read LMPV…LFYK, IPFL…ALCV, HIIG…SVVF, YIFT…STIL, AMAW…LFVA, CIVA…IWSA, and TVFA…ALTL.

Belongs to the sphingomyelin synthase family.

Its subcellular location is the membrane. It participates in sphingolipid metabolism. Functionally, catalyzes the biosynthesis of sphingolipids with very long-chain fatty acid (VLCFA). Required for the formation of plasmodesmal cytoplasmic sleeve during the transition from type I to type II plasmodesmata to modulate post-sieve elements (SE) unloading and symplastic cell-to-cell molecular trafficking at the phloem pole pericycle (PPP)-endodermis interface in roots. This chain is Protein PHLOEM UNLOADING MODULATOR, found in Arabidopsis thaliana (Mouse-ear cress).